The sequence spans 107 residues: Putative ankyrin repeat protein L14 (107 aa).

ANK repeat units lie at residues 19–48 (DNNY…NIRA), 49–78 (DNDC…NIRA), and 80–107 (NDCA…AVLS).

This is Putative ankyrin repeat protein L14 from Acanthamoeba polyphaga (Amoeba).